Here is a 314-residue protein sequence, read N- to C-terminus: Porphobilinogen deaminase (314 aa).

At Cys-243 the chain carries S-(dipyrrolylmethanemethyl)cysteine.

This sequence belongs to the HMBS family. As to quaternary structure, monomer. Requires dipyrromethane as cofactor.

The catalysed reaction is 4 porphobilinogen + H2O = hydroxymethylbilane + 4 NH4(+). It functions in the pathway porphyrin-containing compound metabolism; protoporphyrin-IX biosynthesis; coproporphyrinogen-III from 5-aminolevulinate: step 2/4. Functionally, tetrapolymerization of the monopyrrole PBG into the hydroxymethylbilane pre-uroporphyrinogen in several discrete steps. The chain is Porphobilinogen deaminase from Bordetella bronchiseptica (strain ATCC BAA-588 / NCTC 13252 / RB50) (Alcaligenes bronchisepticus).